The sequence spans 241 residues: MAPK phosphothreonine lyase (241 aa).

H106 serves as the catalytic Proton donor. K136 functions as the Proton acceptor in the catalytic mechanism.

The protein belongs to the phosphothreonine lyase family.

It is found in the secreted. In terms of biological role, secreted effector that irreversibly inactivates host MAP kinases by catalyzing the dephosphorylation of the phosphothreonine residue in the pT-X-pY motif present in MAPKs, via a beta-elimination reaction leading to a dehydrobutyrine residue. This chain is MAPK phosphothreonine lyase (spvC), found in Salmonella choleraesuis (strain SC-B67).